The following is a 940-amino-acid chain: MDKIEVRGARTHNLKNINLTIPRDKLIVITGLSGSGKSSLAFDTLYAEGQRRYVESLSAYARQFLSLMEKPDVDHIEGLSPAISIEQKSTSHNPRSTVGTITEVYDYLRLLYARVGEPRCPEHQVPLAAQTISQMVDKVLELPEGAKMMLLAPIVKERKGEHVKTLENLAAQGFIRARIDGETCDLTDPPTLELHKKHTIEVVVDRVKVRGDLQQRLAESFETALELSGGIAVIAPMEGDGEEIVFSANFACPHCGYSMQELEPRLFSFNNPAGACGTCDGLGVQQYFDPERVIQDANLSLAQGAIRGWDQKNYYYFQMLTSLAEHYDFDLHAPFNSLSKRIQEVILKGSGRTEIEFKYINDRGDIRLKRHPFEGILNTLERRYRDTESNSVREELVKYISTKPCTSCGGTRLRLEARNVFINDTTLPQIVELSIADALTFFATLKLEGQRAQIAEKVMKEINDRLQFLVNVGLNYLNLSRSAETLSGGEAQRIRLASQIGAGLVGVMYVLDEPSIGLHQRDNERLLKTLTHLRDLGNTVLVVEHDEDAIRCADHVIDIGPGAGVHGGQVVAEGTMAEILANPDSLTGQYLSGAKQIIVPTQRTPRDKNKTVELIGASGNNLKEVNLSVPVGLFSCITGVSGSGKSTLINDTFFKIAHTQLNGATTAQPAPYKSIKGLEHFDKVIDIDQSPIGRTPRSNPATYTGIFTPIRELFSGTQESRSRGYKPGRFSFNVRGGRCEACQGDGVIKVEMHFLPDVYVPCDVCKGKRYNRETLEVHYKGKSIDEVLEMTVEDAHEFFAPVPVIARKLQTLMDVGLSYIRLGQAATTLSGGEAQRVKLARELSKRDTGKTLYILDEPTTGLHFHDIQQLLTVLHRLRDHGNTVVVIEHNLDVIKTADWIIDLGPEGGQGGGEIIAQGTPEDVAQIEGSHTARFLKPMLK.

Residue 31–38 coordinates ATP; the sequence is GLSGSGKS. The C4-type zinc-finger motif lies at 252–279; it reads CPHCGYSMQELEPRLFSFNNPAGACGTC. ABC transporter domains lie at 309–586 and 606–936; these read WDQK…PDSL and RDKN…RFLK. ATP is bound at residue 639-646; it reads GVSGSGKS. The C4-type zinc-finger motif lies at 739–765; sequence CEACQGDGVIKVEMHFLPDVYVPCDVC.

This sequence belongs to the ABC transporter superfamily. UvrA family. In terms of assembly, forms a heterotetramer with UvrB during the search for lesions.

The protein resides in the cytoplasm. In terms of biological role, the UvrABC repair system catalyzes the recognition and processing of DNA lesions. UvrA is an ATPase and a DNA-binding protein. A damage recognition complex composed of 2 UvrA and 2 UvrB subunits scans DNA for abnormalities. When the presence of a lesion has been verified by UvrB, the UvrA molecules dissociate. The polypeptide is UvrABC system protein A (Vibrio vulnificus (strain CMCP6)).